Consider the following 563-residue polypeptide: Inorganic phosphate transporter PT2 (563 aa).

Disordered stretches follow at residues 1–51 (MAPR…SGEE) and 67–96 (DGGANGVTYPVGGSRKEQDEISSRGPPAYS). The Extracellular portion of the chain corresponds to 1 to 127 (MAPRYHSAAE…NGEKQSLLVP (127 aa)). The chain crosses the membrane as a helical span at residues 128–148 (CLAVFSSNYNFTVTSIALFLM). Topologically, residues 149–168 (NQDPLYKDASDTVVGSSTVK) are cytoplasmic. Residues 169-189 (MLSYAGAIVGMCTMGYLGDLI) traverse the membrane as a helical segment. At 190–192 (GRR) the chain is on the extracellular side. Residues 193–213 (LAMILTLALVFIGALLSSICA) form a helical membrane-spanning segment. Topologically, residues 214–217 (WGDG) are cytoplasmic. A helical transmembrane segment spans residues 218-238 (VTVLVIMGVCRFVLGVGSGGV). Topologically, residues 239–263 (YPLSAVSAAEGAGSEKSNDRSMRVS) are extracellular. A helical membrane pass occupies residues 264–284 (WAYSMNVPGIMFPYIVALVLW). Topologically, residues 285–291 (CTTHNVD) are cytoplasmic. A helical transmembrane segment spans residues 292–312 (VCFRILLGFGALPALLIWLPA). Over 313–342 (WRMKEDRAYVAKDFAKHLAGVFVSRSYWRQ) the chain is Extracellular. A helical transmembrane segment spans residues 343–363 (LLGTGVCWLLYDVTAYGILLV). Residues 364–380 (QPEITQSIWGNSSSVTD) lie on the Cytoplasmic side of the membrane. The chain crosses the membrane as a helical span at residues 381 to 401 (VIWQNIILNGMGIPGCFMGIL). Over 402 to 412 (VLKQMGVKWLQ) the chain is Extracellular. The helical transmembrane segment at 413 to 433 (FWGFVGLAVSAFLMAATVEIL) threads the bilayer. The Cytoplasmic segment spans residues 434–440 (QGKAWAQ). A helical membrane pass occupies residues 441–461 (LVLLCIVNFFINWGASITTFI). Topologically, residues 462-477 (LPSLVFPPEVRSTYSG) are extracellular. Residues 478–498 (ISAALGKIGAVGGIYTMKAIL) form a helical membrane-spanning segment. Over 499-504 (STGGLT) the chain is Cytoplasmic. Residues 505 to 525 (PMMICAGVPSLAAAILTWFYV) form a helical membrane-spanning segment. At 526 to 563 (DPVPNTLRSSFLQCFGSLAGSCPFIDCRKFRRGSRAFE) the chain is on the extracellular side.

Belongs to the major facilitator superfamily. Phosphate:H(+) symporter (TC 2.A.1.9) family.

The protein localises to the cell membrane. It catalyses the reaction phosphate(in) = phosphate(out). Functionally, inorganic phosphate transporter. Activity is likely sodium-independent. Exhibits higher activity under acidic pH, implying that either the monovalent form of phosphate is the preferred substrate or the transport activity is H(+)-dependent. The chain is Inorganic phosphate transporter PT2 from Toxoplasma gondii (strain ATCC 50861 / VEG).